A 293-amino-acid chain; its full sequence is Undecaprenyl-diphosphatase (293 aa).

Transmembrane regions (helical) follow at residues 3-23 (IALALKAVILGIVEGLTEFLP), 43-63 (KGKIFEIVIQFGAILAVCWEF), 85-105 (VNVIVATIPAIVLALVFGKWI), 109-129 (LFNPITVATAFIIGGVVILLA), 178-198 (FALVPGTSRSGATIIGGMLFG), 203-223 (VATEFSFFLAIPVIFGATVYE), 238-258 (IFAVGFVFAFLSAFLCVRWLL), and 269-289 (FAWYRIAFGIIVLLTAWTGVI).

This sequence belongs to the UppP family.

It localises to the cell inner membrane. It catalyses the reaction di-trans,octa-cis-undecaprenyl diphosphate + H2O = di-trans,octa-cis-undecaprenyl phosphate + phosphate + H(+). Catalyzes the dephosphorylation of undecaprenyl diphosphate (UPP). Confers resistance to bacitracin. This is Undecaprenyl-diphosphatase from Cupriavidus metallidurans (strain ATCC 43123 / DSM 2839 / NBRC 102507 / CH34) (Ralstonia metallidurans).